A 591-amino-acid chain; its full sequence is MSLDFRNINTLWSSVIVETLHRLGLTTAIICPGSRSTPLAIAFAEHPHITAIPILDERSAAFFALGIAKRTQTPTAMVCTSGTAGANFYPTVIEARESRVPLLIFTADRPPELRHCRAGQAIDQIKLYGNYPNWQTELAIPAPEMGLFRYLRQTIIHGWERSHFPTAGVVHFNCPFREPLAPIIQPEIKELVTNFENNRFFESVKPLQPNLTVPCLSLPPQWLTKKRGIIIAGVAHPKDPELYCQAIANLATFLNYPVLTEALSPVRNFAHLNPNLITTYDLLLRNKELAQNLTPDLVIQIGDFPTSKELRNWLETLEPDHWIIDPSAENSDPLHNKTTYLRLSIESFKLEQSKCIEEKNNKSSWLKTWQIIDQKIREEINLTLESVDFLLEGKVSWLLSQILPPKTPIFIANSMSVRNAEFFWQPNNHQIIPYCNRGANGIDGTLSTALGMAYQAQSSVMLTGDLALIHDTNGFLINPHFRGHLTIILINNNGGGIFEMLPISDFNPLFEAFFATPQNLDFSQLCQTYKIPYQKIRDWPQIEKLLKPLPKAGIRILEVQTDRKKDAVWLKKMLSELAKRVDFRSEELSEN.

It belongs to the TPP enzyme family. MenD subfamily. Homodimer. Mg(2+) is required as a cofactor. The cofactor is Mn(2+). Requires thiamine diphosphate as cofactor.

It catalyses the reaction isochorismate + 2-oxoglutarate + H(+) = 5-enolpyruvoyl-6-hydroxy-2-succinyl-cyclohex-3-ene-1-carboxylate + CO2. Its pathway is quinol/quinone metabolism; 1,4-dihydroxy-2-naphthoate biosynthesis; 1,4-dihydroxy-2-naphthoate from chorismate: step 2/7. The protein operates within cofactor biosynthesis; phylloquinone biosynthesis. Its function is as follows. Catalyzes the thiamine diphosphate-dependent decarboxylation of 2-oxoglutarate and the subsequent addition of the resulting succinic semialdehyde-thiamine pyrophosphate anion to isochorismate to yield 2-succinyl-5-enolpyruvyl-6-hydroxy-3-cyclohexene-1-carboxylate (SEPHCHC). The polypeptide is 2-succinyl-5-enolpyruvyl-6-hydroxy-3-cyclohexene-1-carboxylate synthase (Rippkaea orientalis (strain PCC 8801 / RF-1) (Cyanothece sp. (strain PCC 8801))).